The chain runs to 425 residues: Adenylosuccinate synthetase (425 aa).

GTP-binding positions include 12–18 (GDEGKGK) and 40–42 (GHT). Catalysis depends on Asp-13, which acts as the Proton acceptor. Mg(2+)-binding residues include Asp-13 and Gly-40. Residues 13 to 16 (DEGK), 38 to 41 (NAGH), Thr-130, Arg-144, Gln-224, Thr-239, and Arg-301 each bind IMP. The active-site Proton donor is His-41. 297-303 (TVSNRRR) lines the substrate pocket. GTP is bound by residues Arg-303, 329–331 (KLD), and 411–413 (STS).

Belongs to the adenylosuccinate synthetase family. Homodimer. Mg(2+) is required as a cofactor.

The protein resides in the cytoplasm. The catalysed reaction is IMP + L-aspartate + GTP = N(6)-(1,2-dicarboxyethyl)-AMP + GDP + phosphate + 2 H(+). Its pathway is purine metabolism; AMP biosynthesis via de novo pathway; AMP from IMP: step 1/2. Plays an important role in the de novo pathway of purine nucleotide biosynthesis. Catalyzes the first committed step in the biosynthesis of AMP from IMP. The chain is Adenylosuccinate synthetase from Wolbachia pipientis wMel.